The sequence spans 369 residues: 4-hydroxy-3-methylbut-2-en-1-yl diphosphate synthase (flavodoxin) (369 aa).

The [4Fe-4S] cluster site is built by cysteine 270, cysteine 273, cysteine 305, and glutamate 312.

The protein belongs to the IspG family. [4Fe-4S] cluster serves as cofactor.

The enzyme catalyses (2E)-4-hydroxy-3-methylbut-2-enyl diphosphate + oxidized [flavodoxin] + H2O + 2 H(+) = 2-C-methyl-D-erythritol 2,4-cyclic diphosphate + reduced [flavodoxin]. It functions in the pathway isoprenoid biosynthesis; isopentenyl diphosphate biosynthesis via DXP pathway; isopentenyl diphosphate from 1-deoxy-D-xylulose 5-phosphate: step 5/6. Converts 2C-methyl-D-erythritol 2,4-cyclodiphosphate (ME-2,4cPP) into 1-hydroxy-2-methyl-2-(E)-butenyl 4-diphosphate. In Pseudomonas syringae pv. tomato (strain ATCC BAA-871 / DC3000), this protein is 4-hydroxy-3-methylbut-2-en-1-yl diphosphate synthase (flavodoxin).